The chain runs to 562 residues: MSGTILENLSGRKLSILVSSLLLCQVACFLIGGLYAPVPAGHQIVMGIKCRDVAGRQNDTSFFLYSRGNGACDSVQDIDIEQDPLKMANQLVYVFQMPLPRDNRTLDYSRWQQNLIGVLQMDIAYDSSSELREPPKELQLTIDTRLAYRNKNDEDADWKPYAHSIEKRFLDCRAAHVGLQEILYTCDIIPLFELGALHHSFYLLNLRFPMDTPKRLNLQFGHMHDIILTAIHQNGGFTQVWLLLKSVLFPFIIGIMVWFWRRVHILQRSPALLEYMLLYLGGALSFLNLPLEYLTLSFEMPYMLLLSDVRQGIFYAMLLSFWLVFAGEHMLIQDSPNKSTIRSRYWKHLSAVVVGCISLFVFDICERGMQLRNPFYSIWTTPLGAKVAMSFIVLAGVSAGIYFLFLCYMVWKVFKDIGDKRTSLPSMSQARRLHYEGLIYRFKFLMLATLLCAGLTVAGFIMGQMAEGHWKWNEDIEIQLTSAFLTGVYGMWNIYIFALLILYAPSHKQWPTMRHSDETTQSNENIVASAASEEIEFSNLPSDSNPSEISSLTSFTRKVAFD.

Residues 1–13 (MSGTILENLSGRK) are Cytoplasmic-facing. A helical membrane pass occupies residues 14 to 34 (LSILVSSLLLCQVACFLIGGL). At 35 to 239 (YAPVPAGHQI…AIHQNGGFTQ (205 aa)) the chain is on the lumenal side. 2 N-linked (GlcNAc...) asparagine glycosylation sites follow: asparagine 58 and asparagine 103. Residues 240-260 (VWLLLKSVLFPFIIGIMVWFW) form a helical membrane-spanning segment. The Cytoplasmic portion of the chain corresponds to 261–270 (RRVHILQRSP). The helical transmembrane segment at 271–291 (ALLEYMLLYLGGALSFLNLPL) threads the bilayer. The Lumenal segment spans residues 292–311 (EYLTLSFEMPYMLLLSDVRQ). Residues 312 to 332 (GIFYAMLLSFWLVFAGEHMLI) traverse the membrane as a helical segment. Over 333–344 (QDSPNKSTIRSR) the chain is Cytoplasmic. The chain crosses the membrane as a helical span at residues 345-365 (YWKHLSAVVVGCISLFVFDIC). At 366 to 390 (ERGMQLRNPFYSIWTTPLGAKVAMS) the chain is on the lumenal side. The helical transmembrane segment at 391 to 411 (FIVLAGVSAGIYFLFLCYMVW) threads the bilayer. The Cytoplasmic segment spans residues 412–441 (KVFKDIGDKRTSLPSMSQARRLHYEGLIYR). Residues 442–462 (FKFLMLATLLCAGLTVAGFIM) traverse the membrane as a helical segment. Over 463–482 (GQMAEGHWKWNEDIEIQLTS) the chain is Lumenal. The helical transmembrane segment at 483 to 503 (AFLTGVYGMWNIYIFALLILY) threads the bilayer. The Cytoplasmic portion of the chain corresponds to 504-562 (APSHKQWPTMRHSDETTQSNENIVASAASEEIEFSNLPSDSNPSEISSLTSFTRKVAFD). The tract at residues 538-562 (SNLPSDSNPSEISSLTSFTRKVAFD) is disordered. Positions 539 to 556 (NLPSDSNPSEISSLTSFT) are enriched in polar residues.

The protein belongs to the wntless family. Interacts with wg; in the Golgi. Interacts with Vps35, a component of the retromer complex; wls stability is regulated by Vps35.

The protein localises to the presynaptic cell membrane. It is found in the postsynaptic cell membrane. The protein resides in the cell membrane. It localises to the endoplasmic reticulum membrane. Its subcellular location is the endosome membrane. The protein localises to the golgi apparatus membrane. Functionally, a segment polarity gene required for wingless (wg)-dependent patterning processes, acting in both wg-sending cells and wg-target cells. In non-neuronal cells wls directs wg secretion. The wls traffic loop encompasses the Golgi, the cell surface, an endocytic compartment and a retrograde route leading back to the Golgi, and involves clathrin-mediated endocytosis and the retromer complex (a conserved protein complex consisting of Vps35 and Vps26). In neuronal cells (the larval motorneuron NMJ), the wg signal moves across the synapse via the release of wls-containing exosome-like vesicles. Postsynaptic wls is required for the trafficking of fz2 through the fz2-interacting protein Grip. The polypeptide is Protein wntless (Drosophila mojavensis (Fruit fly)).